The sequence spans 351 residues: Molybdate-binding protein MolA (351 aa).

Positions 1 to 21 are cleaved as a signal peptide; the sequence is MKLKSLLIACLLSSLSFSALA. The region spanning 41-322 is the Fe/B12 periplasmic-binding domain; that stretch reads RAVVLQHQTL…WLAKALYPQR (282 aa). Molybdate contacts are provided by residues 47–48, Tyr-217, Arg-264, and 300–301; these read HQ and GY.

The protein belongs to the bacterial solute-binding protein 8 family. In terms of assembly, the complex is composed of two ATP-binding proteins (MolC), two transmembrane proteins (MolB) and a solute-binding protein (MolA).

It localises to the periplasm. With respect to regulation, the MolBCA complex shows a decrease in affinity in the presence of increasing concentrations of substrate and nucleotide. Part of the ABC transporter complex MolBCA involved in molybdate import. Functions as a low-affinity molybdate transporter. Binds to both molybdate and tungstate, but not to sulfate or phosphate. This is Molybdate-binding protein MolA from Haemophilus influenzae (strain ATCC 51907 / DSM 11121 / KW20 / Rd).